The chain runs to 70 residues: U2-agatoxin-Ao1b (70 aa).

The N-terminal stretch at 1-20 (MRAIISLILISAMVFSMIAA) is a signal peptide. A propeptide spanning residues 21 to 34 (VPEEEGLQLSEDER) is cleaved from the precursor. 3 disulfides stabilise this stretch: cysteine 37–cysteine 53, cysteine 44–cysteine 58, and cysteine 52–cysteine 68. Position 69 is a leucine amide (leucine 69).

This sequence belongs to the neurotoxin 01 (U2-agtx) family. As to expression, expressed by the venom gland.

The protein localises to the secreted. Insect active toxin causing rapid but reversible paralysis in crickets. No activity shown in mammals. Does not show effect on mammalian voltage-gated calcium channels. The protein is U2-agatoxin-Ao1b of Agelena orientalis (Funnel-web spider).